Here is a 195-residue protein sequence, read N- to C-terminus: Small ribosomal subunit protein uS7 (195 aa).

This sequence belongs to the universal ribosomal protein uS7 family. Part of the 30S ribosomal subunit.

Functionally, one of the primary rRNA binding proteins, it binds directly to 16S rRNA where it nucleates assembly of the head domain of the 30S subunit. Is located at the subunit interface close to the decoding center. This Sulfolobus acidocaldarius (strain ATCC 33909 / DSM 639 / JCM 8929 / NBRC 15157 / NCIMB 11770) protein is Small ribosomal subunit protein uS7.